Reading from the N-terminus, the 73-residue chain is Translation initiation factor IF-1 (73 aa).

The 73-residue stretch at 1 to 73 (MSEKEAGIEV…SRGRITYRDK (73 aa)) folds into the S1-like domain.

The protein belongs to the IF-1 family. As to quaternary structure, component of the 30S ribosomal translation pre-initiation complex which assembles on the 30S ribosome in the order IF-2 and IF-3, IF-1 and N-formylmethionyl-tRNA(fMet); mRNA recruitment can occur at any time during PIC assembly.

It is found in the cytoplasm. Its function is as follows. One of the essential components for the initiation of protein synthesis. Stabilizes the binding of IF-2 and IF-3 on the 30S subunit to which N-formylmethionyl-tRNA(fMet) subsequently binds. Helps modulate mRNA selection, yielding the 30S pre-initiation complex (PIC). Upon addition of the 50S ribosomal subunit IF-1, IF-2 and IF-3 are released leaving the mature 70S translation initiation complex. The protein is Translation initiation factor IF-1 of Anaeromyxobacter dehalogenans (strain 2CP-C).